The chain runs to 269 residues: UPF0162 protein bbp_163 (269 aa).

It belongs to the UPF0162 family.

In Buchnera aphidicola subsp. Baizongia pistaciae (strain Bp), this protein is UPF0162 protein bbp_163.